The sequence spans 251 residues: uncharacterized protein (251 aa).

A disordered region spans residues 207-251 (ATPHSKRGRTKLYRKEPPGDNRSPPPWQEPHGEGLAEKLSPGPAR).

This is an uncharacterized protein from Treponema pallidum (strain Nichols).